Here is a 309-residue protein sequence, read N- to C-terminus: RuBisCO operon transcriptional regulator (309 aa).

The HTH lysR-type domain occupies 6–63 (ATLHQLKIFAAVARHMSFARAAEELHLTPPALSIQVRQLAEAVGQPLFDQIGKKIYLT). Residues 23-42 (FARAAEELHLTPPALSIQVR) constitute a DNA-binding region (H-T-H motif).

The protein belongs to the LysR transcriptional regulatory family.

Its function is as follows. Trans-acting transcriptional regulator of RuBisCO genes (rbcL1S1) expression. This is RuBisCO operon transcriptional regulator (rbcR) from Acidithiobacillus ferrooxidans (Thiobacillus ferrooxidans).